The chain runs to 90 residues: Mitochondrial import inner membrane translocase subunit Tim10 (90 aa).

The Twin CX3C motif motif lies at 37-62 (CHSKCINKSYGDSDITKQEALCLDRC). Disulfide bonds link Cys37/Cys62 and Cys41/Cys58.

This sequence belongs to the small Tim family. In terms of assembly, heterohexamer; composed of 3 copies of TIM9 and 3 copies of TIM10, named soluble 70 kDa complex. Associates directly with the TIM22 complex, whose core is composed of TIM22 and TIM54. Interacts with the transmembrane regions of multi-pass transmembrane proteins in transit.

The protein localises to the mitochondrion inner membrane. In terms of biological role, mitochondrial intermembrane chaperone that participates in the import and insertion of multi-pass transmembrane proteins into the mitochondrial inner membrane. Also required for the transfer of beta-barrel precursors from the TOM complex to the sorting and assembly machinery (SAM complex) of the outer membrane. Acts as a chaperone-like protein that protects the hydrophobic precursors from aggregation and guide them through the mitochondrial intermembrane space. The protein is Mitochondrial import inner membrane translocase subunit Tim10 (TIM10) of Pichia sorbitophila (strain ATCC MYA-4447 / BCRC 22081 / CBS 7064 / NBRC 10061 / NRRL Y-12695) (Hybrid yeast).